A 153-amino-acid chain; its full sequence is 3-hydroxyacyl-[acyl-carrier-protein] dehydratase FabZ (153 aa).

The active site involves H57.

Belongs to the thioester dehydratase family. FabZ subfamily.

It localises to the cytoplasm. The catalysed reaction is a (3R)-hydroxyacyl-[ACP] = a (2E)-enoyl-[ACP] + H2O. Its function is as follows. Involved in unsaturated fatty acids biosynthesis. Catalyzes the dehydration of short chain beta-hydroxyacyl-ACPs and long chain saturated and unsaturated beta-hydroxyacyl-ACPs. The polypeptide is 3-hydroxyacyl-[acyl-carrier-protein] dehydratase FabZ (Aeromonas hydrophila subsp. hydrophila (strain ATCC 7966 / DSM 30187 / BCRC 13018 / CCUG 14551 / JCM 1027 / KCTC 2358 / NCIMB 9240 / NCTC 8049)).